Consider the following 506-residue polypeptide: Histidine ammonia-lyase (506 aa).

The segment at residues 144-146 (ASG) is a cross-link (5-imidazolinone (Ala-Gly)). The residue at position 145 (S145) is a 2,3-didehydroalanine (Ser).

The protein belongs to the PAL/histidase family. Contains an active site 4-methylidene-imidazol-5-one (MIO), which is formed autocatalytically by cyclization and dehydration of residues Ala-Ser-Gly.

The protein resides in the cytoplasm. It catalyses the reaction L-histidine = trans-urocanate + NH4(+). The protein operates within amino-acid degradation; L-histidine degradation into L-glutamate; N-formimidoyl-L-glutamate from L-histidine: step 1/3. The protein is Histidine ammonia-lyase of Legionella pneumophila subsp. pneumophila (strain Philadelphia 1 / ATCC 33152 / DSM 7513).